The following is a 333-amino-acid chain: DNA repair and recombination protein RadA (333 aa).

ATP is bound at residue 127-134; it reads GEFGSGKT.

Belongs to the eukaryotic RecA-like protein family.

Involved in DNA repair and in homologous recombination. Binds and assemble on single-stranded DNA to form a nucleoprotein filament. Hydrolyzes ATP in a ssDNA-dependent manner and promotes DNA strand exchange between homologous DNA molecules. The protein is DNA repair and recombination protein RadA of Pyrobaculum aerophilum (strain ATCC 51768 / DSM 7523 / JCM 9630 / CIP 104966 / NBRC 100827 / IM2).